We begin with the raw amino-acid sequence, 392 residues long: Autophagy-related protein 21 (392 aa).

WD repeat units follow at residues 200–240 (VHQS…NDEP) and 250–289 (SRPS…TEAD). The L/FRRG motif motif lies at 246-250 (FRRGS).

This sequence belongs to the WD repeat PROPPIN family.

The protein localises to the cytoplasm. The protein resides in the membrane. It localises to the vacuole membrane. Its function is as follows. Required for cytoplasm to vacuole transport (Cvt) vesicles formation and mitophagy. Involved in binding of phosphatidylethanolamine to ATG8 and in recruitment of ATG8 and ATG5 to the pre-autophagosomal structure. Protects ATG8 from ARG4-mediated cleavage. This chain is Autophagy-related protein 21 (ATG21), found in Kluyveromyces lactis (strain ATCC 8585 / CBS 2359 / DSM 70799 / NBRC 1267 / NRRL Y-1140 / WM37) (Yeast).